Here is a 161-residue protein sequence, read N- to C-terminus: Effector CFEM5 (161 aa).

The first 23 residues, 1–23, serve as a signal peptide directing secretion; the sequence is MFSLTKSVLFTSIVAIAAQATTA. The CFEM domain maps to 24–126; sequence VSSPTQTSLP…KVLDAVVASA (103 aa). Cystine bridges form between C46-C78, C56-C63, and C65-C100. Position 60 (D60) interacts with heme.

It belongs to the RBT5 family. In terms of assembly, interacts with Z.mays LRR5; the interaction is direct. Interacts with Z.mays WAK17 isoform 2; the interaction is direct.

The protein localises to the membrane. Its subcellular location is the secreted. Suppresses host programmed cell death during infection by binding to Z.mays WAK17 isoform 2 and Z.mays LRR5, to prevent activation of Z.mays WAK17 isoform 1 and the downstream hypersensitive response. This chain is Effector CFEM5, found in Gibberella zeae (strain ATCC MYA-4620 / CBS 123657 / FGSC 9075 / NRRL 31084 / PH-1) (Wheat head blight fungus).